Reading from the N-terminus, the 373-residue chain is Chaperone protein DnaJ (373 aa).

One can recognise a J domain in the interval 4–68 (NYYQILGVSK…QKRAAYDRLG (65 aa)). Residues 136-214 (GIEKNINFSS…CHGMGRYHKQ (79 aa)) form a CR-type zinc finger. Zn(2+) is bound by residues Cys149, Cys152, Cys166, Cys169, Cys188, Cys191, Cys202, and Cys205. CXXCXGXG motif repeat units follow at residues 149–156 (CNTCHGSG), 166–173 (CDACSGVG), 188–195 (CHKCQGNG), and 202–209 (CKKCHGMG).

Belongs to the DnaJ family. Homodimer. It depends on Zn(2+) as a cofactor.

Its subcellular location is the cytoplasm. Participates actively in the response to hyperosmotic and heat shock by preventing the aggregation of stress-denatured proteins and by disaggregating proteins, also in an autonomous, DnaK-independent fashion. Unfolded proteins bind initially to DnaJ; upon interaction with the DnaJ-bound protein, DnaK hydrolyzes its bound ATP, resulting in the formation of a stable complex. GrpE releases ADP from DnaK; ATP binding to DnaK triggers the release of the substrate protein, thus completing the reaction cycle. Several rounds of ATP-dependent interactions between DnaJ, DnaK and GrpE are required for fully efficient folding. Also involved, together with DnaK and GrpE, in the DNA replication of plasmids through activation of initiation proteins. The protein is Chaperone protein DnaJ of Rickettsia rickettsii (strain Sheila Smith).